Consider the following 423-residue polypeptide: 3-phosphoshikimate 1-carboxyvinyltransferase (423 aa).

Residues lysine 21, serine 22, and arginine 26 each contribute to the 3-phosphoshikimate site. Lysine 21 contacts phosphoenolpyruvate. 2 residues coordinate phosphoenolpyruvate: glycine 92 and arginine 120. Serine 164, glutamine 166, aspartate 312, and lysine 339 together coordinate 3-phosphoshikimate. Residue glutamine 166 participates in phosphoenolpyruvate binding. Catalysis depends on aspartate 312, which acts as the Proton acceptor. Phosphoenolpyruvate contacts are provided by arginine 343 and arginine 385.

The protein belongs to the EPSP synthase family. As to quaternary structure, monomer.

It is found in the cytoplasm. The catalysed reaction is 3-phosphoshikimate + phosphoenolpyruvate = 5-O-(1-carboxyvinyl)-3-phosphoshikimate + phosphate. It participates in metabolic intermediate biosynthesis; chorismate biosynthesis; chorismate from D-erythrose 4-phosphate and phosphoenolpyruvate: step 6/7. Catalyzes the transfer of the enolpyruvyl moiety of phosphoenolpyruvate (PEP) to the 5-hydroxyl of shikimate-3-phosphate (S3P) to produce enolpyruvyl shikimate-3-phosphate and inorganic phosphate. The sequence is that of 3-phosphoshikimate 1-carboxyvinyltransferase from Thermoanaerobacter pseudethanolicus (strain ATCC 33223 / 39E) (Clostridium thermohydrosulfuricum).